A 42-amino-acid polypeptide reads, in one-letter code: Photosystem II reaction center protein J (42 aa).

Residues 10–30 (IPLWFIGVIAGIAALSIVGLF) traverse the membrane as a helical segment.

Belongs to the PsbJ family. As to quaternary structure, PSII is composed of 1 copy each of membrane proteins PsbA, PsbB, PsbC, PsbD, PsbE, PsbF, PsbH, PsbI, PsbJ, PsbK, PsbL, PsbM, PsbT, PsbX, PsbY, PsbZ, Psb30/Ycf12, at least 3 peripheral proteins of the oxygen-evolving complex and a large number of cofactors. It forms dimeric complexes.

It localises to the plastid. It is found in the chloroplast thylakoid membrane. Its function is as follows. One of the components of the core complex of photosystem II (PSII). PSII is a light-driven water:plastoquinone oxidoreductase that uses light energy to abstract electrons from H(2)O, generating O(2) and a proton gradient subsequently used for ATP formation. It consists of a core antenna complex that captures photons, and an electron transfer chain that converts photonic excitation into a charge separation. The polypeptide is Photosystem II reaction center protein J (Zygnema circumcarinatum (Green alga)).